The chain runs to 196 residues: Kunitz trypsin inhibitor 5 (196 aa).

The first 19 residues, 1-19, serve as a signal peptide directing secretion; the sequence is MSSLLYIFLLLAVFISHRG. A disulfide bond links C156 and C167.

Belongs to the protease inhibitor I3 (leguminous Kunitz-type inhibitor) family.

It is found in the endoplasmic reticulum. Can inhibit both serine proteases and cysteine proteases. May be involved in the modulation of the proteases that participate in the hydrolysis of dietary proteins in the gut of spider mites. This chain is Kunitz trypsin inhibitor 5, found in Arabidopsis thaliana (Mouse-ear cress).